Reading from the N-terminus, the 188-residue chain is UPF0301 protein Tcr_1827 (188 aa).

The protein belongs to the UPF0301 (AlgH) family.

This is UPF0301 protein Tcr_1827 from Hydrogenovibrio crunogenus (strain DSM 25203 / XCL-2) (Thiomicrospira crunogena).